A 207-amino-acid chain; its full sequence is Thiamine-phosphate synthase (207 aa).

4-amino-2-methyl-5-(diphosphooxymethyl)pyrimidine-binding positions include 35-39 (QYRDK) and Asn-67. Mg(2+) is bound by residues Asp-68 and Asp-86. Position 105 (Thr-105) interacts with 4-amino-2-methyl-5-(diphosphooxymethyl)pyrimidine. A 2-[(2R,5Z)-2-carboxy-4-methylthiazol-5(2H)-ylidene]ethyl phosphate-binding site is contributed by 132-134 (SVT). A 4-amino-2-methyl-5-(diphosphooxymethyl)pyrimidine-binding site is contributed by Lys-135. Residue Gly-162 participates in 2-[(2R,5Z)-2-carboxy-4-methylthiazol-5(2H)-ylidene]ethyl phosphate binding.

It belongs to the thiamine-phosphate synthase family. Mg(2+) serves as cofactor.

The catalysed reaction is 2-[(2R,5Z)-2-carboxy-4-methylthiazol-5(2H)-ylidene]ethyl phosphate + 4-amino-2-methyl-5-(diphosphooxymethyl)pyrimidine + 2 H(+) = thiamine phosphate + CO2 + diphosphate. It catalyses the reaction 2-(2-carboxy-4-methylthiazol-5-yl)ethyl phosphate + 4-amino-2-methyl-5-(diphosphooxymethyl)pyrimidine + 2 H(+) = thiamine phosphate + CO2 + diphosphate. The enzyme catalyses 4-methyl-5-(2-phosphooxyethyl)-thiazole + 4-amino-2-methyl-5-(diphosphooxymethyl)pyrimidine + H(+) = thiamine phosphate + diphosphate. Its pathway is cofactor biosynthesis; thiamine diphosphate biosynthesis; thiamine phosphate from 4-amino-2-methyl-5-diphosphomethylpyrimidine and 4-methyl-5-(2-phosphoethyl)-thiazole: step 1/1. Functionally, condenses 4-methyl-5-(beta-hydroxyethyl)thiazole monophosphate (THZ-P) and 2-methyl-4-amino-5-hydroxymethyl pyrimidine pyrophosphate (HMP-PP) to form thiamine monophosphate (TMP). This chain is Thiamine-phosphate synthase, found in Pseudomonas putida (strain GB-1).